The chain runs to 114 residues: Ghrelin (114 aa).

A signal peptide spans 1–24 (MNFGKAAIFGVVLFCLLWTEGAQA). Residue Thr27 is the site of O-decanoyl threonine; alternate attachment. Thr27 is lipidated: O-octanoyl threonine; alternate. The propeptide at 55-114 (GVEDDLAGEEIGVTFPLDMKMTQEQFQKQRAAVQDFLYSSLLSLGSVQDTEDKNENPQSQ) is removed in mature form.

It belongs to the motilin family. O-octanoylated by GOAT/MBOAT4. O-octanoylation or O-decanoylation is essential for activity. The O-decanoylated form ghrelin-27-C10 differs in the length of the carbon backbone of the carboxylic acid bound to Thr-27. 33% of frog ghrelin is O-decanoylated. In terms of processing, 80% of frog ghrelin has Asn-52 cleaved from its C-terminus giving rise to ghrelin-27. As to expression, high levels in stomach. Moderate levels in small intestine, pancreas and testis. Low levels in heart, lung and gall bladder.

It localises to the secreted. Functionally, ligand for growth hormone secretagogue receptor type 1 (GHSR). Induces the release of growth hormone from the pituitary. Has an appetite-stimulating effect, induces adiposity and stimulates gastric acid secretion. Involved in growth regulation. The chain is Ghrelin (GHRL) from Aquarana catesbeiana (American bullfrog).